Consider the following 447-residue polypeptide: tRNA-2-methylthio-N(6)-dimethylallyladenosine synthase (447 aa).

One can recognise an MTTase N-terminal domain in the interval 10 to 128 (KLFCISTYGC…FPEYLHRVLQ (119 aa)). [4Fe-4S] cluster contacts are provided by C19, C55, C89, C165, C169, and C172. Positions 151 to 382 (RKSDVKAFVT…EAINKKVVIK (232 aa)) constitute a Radical SAM core domain. A TRAM domain is found at 384–447 (KEYEGKVVEV…PFSLIGEIVE (64 aa)).

The protein belongs to the methylthiotransferase family. MiaB subfamily. Monomer. The cofactor is [4Fe-4S] cluster.

It is found in the cytoplasm. The enzyme catalyses N(6)-dimethylallyladenosine(37) in tRNA + (sulfur carrier)-SH + AH2 + 2 S-adenosyl-L-methionine = 2-methylsulfanyl-N(6)-dimethylallyladenosine(37) in tRNA + (sulfur carrier)-H + 5'-deoxyadenosine + L-methionine + A + S-adenosyl-L-homocysteine + 2 H(+). Functionally, catalyzes the methylthiolation of N6-(dimethylallyl)adenosine (i(6)A), leading to the formation of 2-methylthio-N6-(dimethylallyl)adenosine (ms(2)i(6)A) at position 37 in tRNAs that read codons beginning with uridine. The chain is tRNA-2-methylthio-N(6)-dimethylallyladenosine synthase from Clostridium perfringens (strain SM101 / Type A).